Here is a 192-residue protein sequence, read N- to C-terminus: A-type ATP synthase subunit E (192 aa).

Belongs to the V-ATPase E subunit family. As to quaternary structure, has multiple subunits with at least A(3), B(3), C, D, E, F, H, I and proteolipid K(x).

It localises to the cell membrane. Functionally, component of the A-type ATP synthase that produces ATP from ADP in the presence of a proton gradient across the membrane. The polypeptide is A-type ATP synthase subunit E (Halorubrum lacusprofundi (strain ATCC 49239 / DSM 5036 / JCM 8891 / ACAM 34)).